Reading from the N-terminus, the 899-residue chain is Protein argonaute (899 aa).

The segment at 107-129 (TQKPKRRGGRAGGMRGNRGGPST) is disordered. Residues 116–125 (RAGGMRGNRG) are compositionally biased toward gly residues. The PAZ domain occupies 229-313 (SMCELLNENR…KQDDYCNSVL (85 aa)). The 324-residue stretch at 555–878 (LVVVVIPGPK…LSKFCGEILG (324 aa)) folds into the Piwi domain.

The protein belongs to the argonaute family. Ago subfamily. Interacts with miR2. Highly specific binding to the mRNA m7G-cap. May be a component of the RNA-induced silencing complex (RISC), a sequence-specific, multicomponent nuclease that destroys or silences messenger RNAs homologous to the silencing trigger.

The protein resides in the cytoplasm. Plays an essential role in growth and, with Dicer, also involved in microRNA (miRNA)-mediated translational repression. The RNA interference pathway is implicated in antigenic variation having a role in regulation of variant-specific surface protein (VSP)-coding gene expression. Several VSP genes are transcribed but only transcripts encoding the VSP to be expressed accumulate. Antisense RNAs corresponding to the silenced VSP genes are detected. This chain is Protein argonaute, found in Giardia intestinalis (strain ATCC 50581 / GS clone H7) (Giardia lamblia).